The sequence spans 434 residues: Ribosomal protein uS12 methylthiotransferase RimO (434 aa).

An MTTase N-terminal domain is found at 4 to 122 (NRVDVITLGC…LISHLGKSYY (119 aa)). Cysteine 13, cysteine 51, cysteine 85, cysteine 146, cysteine 150, and cysteine 153 together coordinate [4Fe-4S] cluster. Residues 132-363 (TTPRHYAYLK…MAVQERISAA (232 aa)) form the Radical SAM core domain. One can recognise a TRAM domain in the interval 366-434 (EAKIGSRLHV…PFDLYARIVD (69 aa)).

The protein belongs to the methylthiotransferase family. RimO subfamily. [4Fe-4S] cluster is required as a cofactor.

The protein resides in the cytoplasm. The enzyme catalyses L-aspartate(89)-[ribosomal protein uS12]-hydrogen + (sulfur carrier)-SH + AH2 + 2 S-adenosyl-L-methionine = 3-methylsulfanyl-L-aspartate(89)-[ribosomal protein uS12]-hydrogen + (sulfur carrier)-H + 5'-deoxyadenosine + L-methionine + A + S-adenosyl-L-homocysteine + 2 H(+). Its function is as follows. Catalyzes the methylthiolation of an aspartic acid residue of ribosomal protein uS12. This chain is Ribosomal protein uS12 methylthiotransferase RimO, found in Porphyromonas gingivalis (strain ATCC BAA-308 / W83).